The sequence spans 204 residues: Thymidylate kinase (204 aa).

An ATP-binding site is contributed by 11 to 18; that stretch reads GLDKSGKT.

The protein belongs to the thymidylate kinase family.

The enzyme catalyses dTMP + ATP = dTDP + ADP. It participates in pyrimidine metabolism; dTTP biosynthesis. The chain is Thymidylate kinase (TMK) from Cowpox virus (strain GRI-90 / Grishak) (CPV).